The primary structure comprises 424 residues: MVVVKEGEYAIRDPSLAPKGRDMIEWARDHMPVLGAIRERFEEERPLEGITVGMTLHLEAKTAVLVETLMAGGAEVAITGCNPLSTKDEVAAALVEEGVHVYAWRGETEEEYYQNIDRVLSHEPDIIVDDGADCIARVHTEFPDLAERVIGATEETTTGVNRLHAMHREGVLKFPVIAVNDAKTKYLMDNRYGTGQSALDGLMRATNILLAGKTVVVVGYGWCGRGIARRARGLGANVIVVEVDPIKAMEAIFDGFRVMPMDRAAEEGDIFITATGNRDVIRGEHIEKMKDGVILANAGHFDVEIDKEYLEEHCEEKIDRRGGLVTEYRMPDGKRVYLIAEGRLVNLAAGEGHPIEIMDISFALQALSVEVLAKEGKEMEPGVYKVPKDVDKRVAELKLESMGIELEELTPEQREYMKSWEEGT.

Substrate-binding residues include Asp-130 and Glu-155. An NAD(+)-binding site is contributed by 156 to 158 (TTT). Residues Lys-185 and Asp-189 each contribute to the substrate site. NAD(+) contacts are provided by residues Asn-190, 219 to 224 (GYGWCG), Glu-242, Asn-277, 298 to 300 (AGH), and Asn-346.

The protein belongs to the adenosylhomocysteinase family. NAD(+) serves as cofactor.

Its subcellular location is the cytoplasm. It catalyses the reaction S-inosyl-L-homocysteine + H2O = L-homocysteine + inosine. It participates in amino-acid biosynthesis; S-adenosyl-L-methionine biosynthesis. In terms of biological role, catalyzes the hydrolysis of S-inosyl-L-homocysteine (SIH) to L-homocysteine (Hcy) and inosine. Likely functions in a S-adenosyl-L-methionine (SAM) recycling pathway from S-adenosyl-L-homocysteine (SAH) produced from SAM-dependent methylation reactions. Can also catalyze the reverse reaction in vitro, i.e. the synthesis of SIH from Hcy and inosine. This chain is S-inosyl-L-homocysteine hydrolase, found in Methanopyrus kandleri (strain AV19 / DSM 6324 / JCM 9639 / NBRC 100938).